The following is a 117-amino-acid chain: Large ribosomal subunit protein bL19 (117 aa).

Belongs to the bacterial ribosomal protein bL19 family.

This protein is located at the 30S-50S ribosomal subunit interface and may play a role in the structure and function of the aminoacyl-tRNA binding site. The protein is Large ribosomal subunit protein bL19 of Micrococcus luteus (strain ATCC 4698 / DSM 20030 / JCM 1464 / CCM 169 / CCUG 5858 / IAM 1056 / NBRC 3333 / NCIMB 9278 / NCTC 2665 / VKM Ac-2230) (Micrococcus lysodeikticus).